Consider the following 151-residue polypeptide: Putative pre-16S rRNA nuclease (151 aa).

It belongs to the YqgF nuclease family.

Its subcellular location is the cytoplasm. Functionally, could be a nuclease involved in processing of the 5'-end of pre-16S rRNA. This is Putative pre-16S rRNA nuclease from Neisseria meningitidis serogroup B (strain ATCC BAA-335 / MC58).